A 1490-amino-acid polypeptide reads, in one-letter code: WD repeat-containing protein 7 (1490 aa).

7 WD repeats span residues 17–56, 62–104, 156–199, 324–366, 404–443, 462–507, and 558–597; these read APTH…QINP, GHTA…CIEF, ISPD…SDMQ, LICP…DKQG, NEPL…IVQL, GHRN…MKHI, and RHLF…LDRC. Disordered regions lie at residues 761 to 783 and 911 to 945; these read DEEE…YRSS and GDHM…IVQG. Basic and acidic residues predominate over residues 768–782; sequence IMRQRREESDPEYRS. Phosphoserine is present on Ser-935. Over residues 936-945 the composition is skewed to polar residues; the sequence is PPTSSNIVQG. WD repeat units lie at residues 1351–1390 and 1392–1432; these read PAIC…CQTI and GHKG…LGSI. At Ser-1456 the chain carries Phosphoserine.

The chain is WD repeat-containing protein 7 (WDR7) from Homo sapiens (Human).